The following is a 313-amino-acid chain: MSESQSEFPGGGTTGDIVRTMQEAQERAAVLAQALPFLRRYAGDTIVVKYGGHAMVDDSLSNAFGHDIALLKLVGVNPVIVHGGGPQISAMLTRLQIPSTFVDGLRVTDAAMVDVIEMVLAGKVNKQVAGLINQAGALAVGISGKDGGLITARRLQRTTRDASGQERALDLGFVGEPTHIDPRVLYALSGSGLIPVVAPVGIGEAGETYNINADTAAGAIAGAVHATRLLMLTDVPGVLDETGALIPELTAEEARRGIASGMISGGMIPKVETCLEAVRSGARAAVILDGRVPHACLLELFTEAGPGTLIRGE.

Residues 84–85, Arg-106, and Asn-210 each bind substrate; that span reads GG.

The protein belongs to the acetylglutamate kinase family. ArgB subfamily.

It localises to the cytoplasm. The catalysed reaction is N-acetyl-L-glutamate + ATP = N-acetyl-L-glutamyl 5-phosphate + ADP. The protein operates within amino-acid biosynthesis; L-arginine biosynthesis; N(2)-acetyl-L-ornithine from L-glutamate: step 2/4. In terms of biological role, catalyzes the ATP-dependent phosphorylation of N-acetyl-L-glutamate. The protein is Acetylglutamate kinase of Gluconacetobacter diazotrophicus (strain ATCC 49037 / DSM 5601 / CCUG 37298 / CIP 103539 / LMG 7603 / PAl5).